A 662-amino-acid polypeptide reads, in one-letter code: MPPGGSGQGGCPRRPPALAGPLPPPPPPPPLPLLLGLLLLLGAAEGARVSSSLSTTHHVHHFHSKHGTVPIAINRMPFLTRSGHAGTTYIFGKGGALITYTWPPNDRPSTRMDRLAVGFSTHQRSAVLVRVDSASGLGDYLQLHIDQGTVGVIFNVGTDDITIDEPNAIVSDGKYHVVRFTRSGGNATLQVDSWPVNERYPAGNFDNERLAIARQRIPYRLGRVVDEWLLDKGRQLTIFNSQAAIKIGGRDQGRPFQGQVSGLYYNGLKVLALAAESDPNVRTEGHLRLVGEGPSVLLSAETTATTLLADMATTIMETTTTMATTTTRRGRSPTMRDSTTQNTDDLLVASAECPSDDEDLEECEPSTGGELILPIITEDSLDPPPVATRSPFVPPPPTFYPFLTGVGATQDTLPPPAARRPSSGGPCQAERDDSDCEEPVEASGFASGEVFDSSLPPTDDEDFYTTFPLVTDRTTLLSPRKPAPRPNLRTDGATGAPGVLLAPSAPAPNLPAGKMNHRDPLQPLLENPPLGPGVPTAFEPRRPPPLRPGVTSVPGFPRLPTANPTGPGERGPPGAVEVIRESSSTTGMVVGIVAAAALCILILLYAMYKYRNRDEGSYQVDQSRNYISNSAQSNGAVVKEKAPAAPKTPSKAKKNKDKEYYV.

Over residues 1 to 10 the composition is skewed to gly residues; the sequence is MPPGGSGQGG. Residues 1–27 are disordered; sequence MPPGGSGQGGCPRRPPALAGPLPPPPP. Residues 1 to 46 form the signal peptide; it reads MPPGGSGQGGCPRRPPALAGPLPPPPPPPPLPLLLGLLLLLGAAEG. The Extracellular segment spans residues 47-586; it reads ARVSSSLSTT…EVIRESSSTT (540 aa). The 209-residue stretch at 87 to 295 folds into the Laminin G-like domain; the sequence is TTYIFGKGGA…HLRLVGEGPS (209 aa). Ca(2+) contacts are provided by D139 and V156. N-linked (GlcNAc...) asparagine glycosylation is present at N186. Ca(2+) contacts are provided by I238 and N240. O-linked (Xyl...) (heparan sulfate) serine glycosylation is present at S350. Disordered regions lie at residues 408 to 458, 476 to 496, and 530 to 557; these read ATQD…LPPT, LLSPRKPAPRPNLRTDGATGA, and LGPGVPTAFEPRRPPPLRPGVTSVPGFP. A helical transmembrane segment spans residues 587-607; that stretch reads GMVVGIVAAAALCILILLYAM. The Cytoplasmic segment spans residues 608-662; that stretch reads YKYRNRDEGSYQVDQSRNYISNSAQSNGAVVKEKAPAAPKTPSKAKKNKDKEYYV. The segment at 629-662 is disordered; that stretch reads NSAQSNGAVVKEKAPAAPKTPSKAKKNKDKEYYV.

Belongs to the neurexin family. Interacts (via cytoplasmic C-terminal region) with CASK. Isoform Beta 4b binds alpha-dystroglycan and neuroligins NLGN1, NLGN2 and NLGN3. Interacts with CBLN1, CBLN2 and, less avidly, with CBLN4. Interacts with CLSTN3. Post-translationally, O-glycosylated; contains heparan sulfate. Heparan sulfate attachment is required for synapse development by mediating interactions with neuroligins. Brain (neuronal synapse).

It localises to the presynaptic cell membrane. Functionally, neuronal cell surface protein that may be involved in cell recognition and cell adhesion. This is Neurexin-2-beta (Nrxn2) from Rattus norvegicus (Rat).